We begin with the raw amino-acid sequence, 303 residues long: UPF0282 protein MM_2966 (303 aa).

Belongs to the UPF0282 family.

The polypeptide is UPF0282 protein MM_2966 (Methanosarcina mazei (strain ATCC BAA-159 / DSM 3647 / Goe1 / Go1 / JCM 11833 / OCM 88) (Methanosarcina frisia)).